The following is a 357-amino-acid chain: Histidinol-phosphate aminotransferase (357 aa).

An N6-(pyridoxal phosphate)lysine modification is found at lysine 221.

The protein belongs to the class-II pyridoxal-phosphate-dependent aminotransferase family. Histidinol-phosphate aminotransferase subfamily. Pyridoxal 5'-phosphate is required as a cofactor.

The catalysed reaction is L-histidinol phosphate + 2-oxoglutarate = 3-(imidazol-4-yl)-2-oxopropyl phosphate + L-glutamate. It participates in amino-acid biosynthesis; L-histidine biosynthesis; L-histidine from 5-phospho-alpha-D-ribose 1-diphosphate: step 7/9. The polypeptide is Histidinol-phosphate aminotransferase (hisC) (Sulfurisphaera tokodaii (strain DSM 16993 / JCM 10545 / NBRC 100140 / 7) (Sulfolobus tokodaii)).